The chain runs to 618 residues: F-box/LRR-repeat protein At3g58940 (618 aa).

The region spanning 1–47 is the F-box domain; that stretch reads MDRVSNLPEEVRCHILSFLPTKHAALTSVLSKSWLNLWKFETNLDID. 6 LRR repeats span residues 147–176, 196–223, 224–249, 282–313, 314–339, and 354–379; these read LKLRSEHCVNWWHWDIGASLPNLKSLNIDS, EVHMANMEWRELDETMSSASLTKLSIHG, TGVEEFEHPKSISIDTPNLLYLNYSD, TLYLTEDTLEVLTMCCESMPVFNNLKTLGLKS, DEGRGWQAVPALLRNCPHLEFLIIEG, and CISREDKGRSLISCPVKKLEVRGFRG. The segment at 587–618 is disordered; sequence ATDSERAETSSNQEMTELGQATATYFPPREGE. Over residues 595–609 the composition is skewed to polar residues; that stretch reads TSSNQEMTELGQATA.

The sequence is that of F-box/LRR-repeat protein At3g58940 from Arabidopsis thaliana (Mouse-ear cress).